A 1038-amino-acid polypeptide reads, in one-letter code: TonB-dependent receptor P39 (1038 aa).

Residues 1–39 (MFKQKLKMKPKIKRNCTFSGLAFILMLLFSSFTVNNLNA) form the signal peptide. The TonB box motif lies at 120–127 (DEVVVIGY). The TBDR plug domain occupies 131–243 (KRADVIGAVG…ANGVVLITTK (113 aa)). One can recognise a TBDR beta-barrel domain in the interval 249–1038 (FPKMTVDYIS…EIVIGLNVEF (790 aa)). Residues 1021 to 1038 (SLRYPNQTEIVIGLNVEF) carry the TonB C-terminal box motif.

Belongs to the TonB-dependent receptor family.

The protein localises to the cell outer membrane. Functionally, tonB-dependent receptor probably involved in ulvan degradation. Ulvan is the main polysaccharide component of the Ulvales (green seaweed) cell wall. It is composed of disaccharide building blocks comprising 3-sulfated rhamnose (Rha3S) linked to D-glucuronic acid (GlcA), L-iduronic acid (IduA), or D-xylose (Xyl). The TonB-dependent receptor may mediate transport of ulvan oligosaccharides from the surface of the outer membrane to the periplasm for subsequent degradation. The chain is TonB-dependent receptor P39 from Formosa agariphila (strain DSM 15362 / KCTC 12365 / LMG 23005 / KMM 3901 / M-2Alg 35-1).